Reading from the N-terminus, the 183-residue chain is Shikimate kinase (183 aa).

Residue 18–23 (GVGKTT) participates in ATP binding. T22 contacts Mg(2+). Substrate contacts are provided by D40, R64, and G86. Position 125 (R125) interacts with ATP. Substrate is bound at residue R143.

This sequence belongs to the shikimate kinase family. In terms of assembly, monomer. Mg(2+) is required as a cofactor.

Its subcellular location is the cytoplasm. The enzyme catalyses shikimate + ATP = 3-phosphoshikimate + ADP + H(+). Its pathway is metabolic intermediate biosynthesis; chorismate biosynthesis; chorismate from D-erythrose 4-phosphate and phosphoenolpyruvate: step 5/7. Functionally, catalyzes the specific phosphorylation of the 3-hydroxyl group of shikimic acid using ATP as a cosubstrate. The chain is Shikimate kinase from Oceanobacillus iheyensis (strain DSM 14371 / CIP 107618 / JCM 11309 / KCTC 3954 / HTE831).